Consider the following 131-residue polypeptide: Ribosome-binding factor A (131 aa).

This sequence belongs to the RbfA family. Monomer. Binds 30S ribosomal subunits, but not 50S ribosomal subunits or 70S ribosomes.

It localises to the cytoplasm. In terms of biological role, one of several proteins that assist in the late maturation steps of the functional core of the 30S ribosomal subunit. Associates with free 30S ribosomal subunits (but not with 30S subunits that are part of 70S ribosomes or polysomes). Required for efficient processing of 16S rRNA. May interact with the 5'-terminal helix region of 16S rRNA. This chain is Ribosome-binding factor A, found in Thermotoga sp. (strain RQ2).